A 107-amino-acid polypeptide reads, in one-letter code: uncharacterized protein (107 aa).

2 helical membrane passes run Cys11–Ile31 and Leu58–Gln78.

The protein resides in the mitochondrion membrane. This is an uncharacterized protein from Saccharomyces cerevisiae (strain ATCC 204508 / S288c) (Baker's yeast).